The sequence spans 225 residues: Lipoprotein-releasing system ATP-binding protein LolD (225 aa).

One can recognise an ABC transporter domain in the interval 5–225 (LEVMDLTKGY…RLVDGRVVAD (221 aa)). Residue 41 to 48 (GASGTGKS) coordinates ATP.

This sequence belongs to the ABC transporter superfamily. Lipoprotein translocase (TC 3.A.1.125) family. As to quaternary structure, the complex is composed of two ATP-binding proteins (LolD) and two transmembrane proteins (LolC and LolE).

Its subcellular location is the cell inner membrane. In terms of biological role, part of the ABC transporter complex LolCDE involved in the translocation of mature outer membrane-directed lipoproteins, from the inner membrane to the periplasmic chaperone, LolA. Responsible for the formation of the LolA-lipoprotein complex in an ATP-dependent manner. This is Lipoprotein-releasing system ATP-binding protein LolD from Geobacter metallireducens (strain ATCC 53774 / DSM 7210 / GS-15).